Consider the following 78-residue polypeptide: Large ribosomal subunit protein bL28 (78 aa).

This sequence belongs to the bacterial ribosomal protein bL28 family.

The polypeptide is Large ribosomal subunit protein bL28 (Nostoc sp. (strain PCC 7120 / SAG 25.82 / UTEX 2576)).